A 217-amino-acid polypeptide reads, in one-letter code: Ras-related protein RABA2a (217 aa).

19–26 (GDSGVGKS) serves as a coordination point for GTP. Residues 41-49 (SKSTIGVEF) carry the Effector region motif. GTP contacts are provided by residues 67-71 (DTAGQ), 125-128 (NKTD), and 155-156 (SA). Cys213 carries S-palmitoyl cysteine lipidation. At Cys214 the chain carries Cysteine methyl ester. Cys214 carries S-geranylgeranyl cysteine lipidation. Positions 215–217 (SSS) are cleaved as a propeptide — removed in mature form.

It belongs to the small GTPase superfamily. Rab family. Expressed in root tips.

It is found in the endosome membrane. The protein localises to the golgi apparatus. The protein resides in the trans-Golgi network membrane. Its function is as follows. Intracellular vesicle trafficking and protein transport. This is Ras-related protein RABA2a (RABA2A) from Arabidopsis thaliana (Mouse-ear cress).